The chain runs to 1373 residues: Insulin-like growth factor 1 receptor (1373 aa).

Positions 1–30 (MKSGSGGGSPTSLWGLVFLSAALSLWPTSG) are cleaved as a signal peptide. A disulfide bridge connects residues cysteine 33 and cysteine 52. 3 N-linked (GlcNAc...) asparagine glycosylation sites follow: asparagine 51, asparagine 102, and asparagine 135. 13 disulfide bridges follow: cysteine 150-cysteine 178, cysteine 182-cysteine 205, cysteine 192-cysteine 211, cysteine 215-cysteine 224, cysteine 219-cysteine 230, cysteine 231-cysteine 239, cysteine 235-cysteine 248, cysteine 251-cysteine 260, cysteine 264-cysteine 276, cysteine 282-cysteine 303, cysteine 307-cysteine 321, cysteine 324-cysteine 328, and cysteine 332-cysteine 354. N-linked (GlcNAc...) asparagine glycosylation occurs at asparagine 245. Residue asparagine 314 is glycosylated (N-linked (GlcNAc...) asparagine). Asparagine 418 and asparagine 439 each carry an N-linked (GlcNAc...) asparagine glycan. A disulfide bond links cysteine 456 and cysteine 489. 4 consecutive Fibronectin type-III domains span residues 490 to 610 (ESDV…TNAS), 611 to 709 (VPSI…TEAE), 735 to 829 (RPER…TMPA), and 835 to 928 (IPGP…VPAK). Asparagine 535, asparagine 608, asparagine 623, asparagine 641, asparagine 748, asparagine 757, asparagine 765, asparagine 901, and asparagine 914 each carry an N-linked (GlcNAc...) asparagine glycan. The Extracellular segment spans residues 742–936 (DVMQVANTTM…AKTTYENFMH (195 aa)). The helical transmembrane segment at 937-960 (LIIALPVAILLIVGGLVIMLYVFH) threads the bilayer. Residues 961–1373 (RKRNNSRLGN…ALPLPQSSTC (413 aa)) lie on the Cytoplasmic side of the membrane. An IRS1- and SHC1-binding motif is present at residues 978–981 (NPEY). Phosphotyrosine is present on tyrosine 981. Residues 1000–1276 (ITMNRELGQG…SIKDEMEPSF (277 aa)) enclose the Protein kinase domain. ATP is bound by residues 1006–1014 (LGQGSFGMV) and lysine 1034. Catalysis depends on aspartate 1137, which acts as the Proton acceptor. Phosphotyrosine; by autocatalysis occurs at positions 1163, 1167, and 1168. Glycyl lysine isopeptide (Lys-Gly) (interchain with G-Cter in ubiquitin) cross-links involve residues lysine 1170 and lysine 1173. Serine 1280 carries the post-translational modification Phosphoserine; by GSK3-beta. The disordered stretch occupies residues 1283–1373 (YSEENKPPEP…ALPLPQSSTC (91 aa)). At serine 1284 the chain carries Phosphoserine. A compositionally biased stretch (acidic residues) spans 1292–1305 (PEELEMELEMEPEN). The segment covering 1306-1322 (MESVPLDPSASSASLPL) has biased composition (low complexity). The span at 1323–1332 (PERHSGHKAE) shows a compositional bias: basic and acidic residues.

Belongs to the protein kinase superfamily. Tyr protein kinase family. Insulin receptor subfamily. Tetramer of 2 alpha and 2 beta chains linked by disulfide bonds. The alpha chains contribute to the formation of the ligand-binding domain, while the beta chain carries the kinase domain. Interacts with PIK3R1 and with the PTB/PID domains of IRS1 and SHC1 in vitro when autophosphorylated on tyrosine residues. Forms a hybrid receptor with INSR, the hybrid is a tetramer consisting of 1 alpha chain and 1 beta chain of INSR and 1 alpha chain and 1 beta chain of IGF1R. Interacts with ARRB1 and ARRB2. Interacts with GRB10. Interacts with RACK1. Interacts with SOCS1, SOCS2 and SOCS3. Interacts with 14-3-3 proteins. Interacts with NMD2. Interacts with MAP3K5. Interacts with STAT3. Found in a ternary complex with IGF1 and ITGAV:ITGB3 or ITGA6:ITGB4. Interacts (nascent precursor form) with ZFAND2B. Post-translationally, autophosphorylated on tyrosine residues in response to ligand binding. Autophosphorylation occurs in trans, i.e. one subunit of the dimeric receptor phosphorylates tyrosine residues on the other subunit. Autophosphorylation occurs in a sequential manner; Tyr-1167 is predominantly phosphorylated first, followed by phosphorylation of Tyr-1163 and Tyr-1168. While every single phosphorylation increases kinase activity, all three tyrosine residues in the kinase activation loop (Tyr-1163, Tyr-1167 and Tyr-1168) have to be phosphorylated for optimal activity. Can be autophosphorylated at additional tyrosine residues (in vitro). Autophosphorylated is followed by phosphorylation of juxtamembrane tyrosines and C-terminal serines. May also be phosphorylated at Tyr-1163 and Tyr-1168 by mTORC2. Phosphorylation of Tyr-981 is required for IRS1- and SHC1-binding. Phosphorylation of Ser-1280 by GSK-3beta restrains kinase activity and promotes cell surface expression, it requires a priming phosphorylation at Ser-1284. Dephosphorylated by PTPN1. Polyubiquitinated at Lys-1170 and Lys-1173 through both 'Lys-48' and 'Lys-29' linkages, promoting receptor endocytosis and subsequent degradation by the proteasome. Ubiquitination is facilitated by pre-existing phosphorylation. In terms of processing, sumoylated with SUMO1. Post-translationally, controlled by regulated intramembrane proteolysis (RIP). Undergoes metalloprotease-dependent constitutive ectodomain shedding to produce a membrane-anchored 52 kDa C-Terminal fragment which is further processed by presenilin gamma-secretase to yield an intracellular 50 kDa fragment.

Its subcellular location is the cell membrane. It catalyses the reaction L-tyrosyl-[protein] + ATP = O-phospho-L-tyrosyl-[protein] + ADP + H(+). With respect to regulation, activated by autophosphorylation at Tyr-1163, Tyr-1167 and Tyr-1168 on the kinase activation loop; phosphorylation at all three tyrosine residues is required for optimal kinase activity. Inhibited by MSC1609119A-1, BMS-754807, PQIP, benzimidazole pyridinone, isoquinolinedione, bis-azaindole, 3-cyanoquinoline, 2,4-bis-arylamino-1,3-pyrimidine, pyrrolopyrimidine, pyrrole-5-carboxaldehyde, picropodophyllin (PPP), tyrphostin derivatives. While most inhibitors bind to the ATP binding pocket, MSC1609119A-1 functions as allosteric inhibitor and binds close to the DFG motif and the activation loop. Receptor tyrosine kinase which mediates actions of insulin-like growth factor 1 (IGF1). Binds IGF1 with high affinity and IGF2 and insulin (INS) with a lower affinity. The activated IGF1R is involved in cell growth and survival control. IGF1R is crucial for tumor transformation and survival of malignant cell. Ligand binding activates the receptor kinase, leading to receptor autophosphorylation, and tyrosines phosphorylation of multiple substrates, that function as signaling adapter proteins including, the insulin-receptor substrates (IRS1/2), Shc and 14-3-3 proteins. Phosphorylation of IRSs proteins lead to the activation of two main signaling pathways: the PI3K-AKT/PKB pathway and the Ras-MAPK pathway. The result of activating the MAPK pathway is increased cellular proliferation, whereas activating the PI3K pathway inhibits apoptosis and stimulates protein synthesis. Phosphorylated IRS1 can activate the 85 kDa regulatory subunit of PI3K (PIK3R1), leading to activation of several downstream substrates, including protein AKT/PKB. AKT phosphorylation, in turn, enhances protein synthesis through mTOR activation and triggers the antiapoptotic effects of IGFIR through phosphorylation and inactivation of BAD. In parallel to PI3K-driven signaling, recruitment of Grb2/SOS by phosphorylated IRS1 or Shc leads to recruitment of Ras and activation of the ras-MAPK pathway. In addition to these two main signaling pathways IGF1R signals also through the Janus kinase/signal transducer and activator of transcription pathway (JAK/STAT). Phosphorylation of JAK proteins can lead to phosphorylation/activation of signal transducers and activators of transcription (STAT) proteins. In particular activation of STAT3, may be essential for the transforming activity of IGF1R. The JAK/STAT pathway activates gene transcription and may be responsible for the transforming activity. JNK kinases can also be activated by the IGF1R. IGF1 exerts inhibiting activities on JNK activation via phosphorylation and inhibition of MAP3K5/ASK1, which is able to directly associate with the IGF1R. When present in a hybrid receptor with INSR, binds IGF1. The chain is Insulin-like growth factor 1 receptor (Igf1r) from Mus musculus (Mouse).